We begin with the raw amino-acid sequence, 48 residues long: Large ribosomal subunit protein eL40 (48 aa).

This sequence belongs to the eukaryotic ribosomal protein eL40 family.

This chain is Large ribosomal subunit protein eL40, found in Methanosphaera stadtmanae (strain ATCC 43021 / DSM 3091 / JCM 11832 / MCB-3).